Here is a 387-residue protein sequence, read N- to C-terminus: Protein RecA (387 aa).

78–85 (GPESSGKT) lines the ATP pocket. Residues 350 to 369 (QTREVKSIERDPKETKETKS) show a composition bias toward basic and acidic residues. Residues 350 to 387 (QTREVKSIERDPKETKETKSKQPVSFSTEAEVDIAVGE) form a disordered region.

The protein belongs to the RecA family.

The protein resides in the cytoplasm. Functionally, can catalyze the hydrolysis of ATP in the presence of single-stranded DNA, the ATP-dependent uptake of single-stranded DNA by duplex DNA, and the ATP-dependent hybridization of homologous single-stranded DNAs. It interacts with LexA causing its activation and leading to its autocatalytic cleavage. The protein is Protein RecA of Leptospira meyeri.